The chain runs to 328 residues: Protein MGF 300-4L (328 aa).

Belongs to the asfivirus MGF 300 family.

The protein is Protein MGF 300-4L of Ornithodoros (relapsing fever ticks).